The sequence spans 268 residues: Regulation of nuclear pre-mRNA domain-containing protein 1A (268 aa).

In terms of domain architecture, CID spans 1 to 133 (MSAFSEAALE…QLRQALYGDR (133 aa)).

This sequence belongs to the UPF0400 (RTT103) family. May form a heterodimer with RPRD1B. Associates with the RNA polymerase II subunit POLR2A (via CTD phosphorylated at 'Ser-2' and 'Ser-7' of the heptad repeats).

The protein resides in the nucleus. Its function is as follows. Interacts with phosphorylated C-terminal heptapeptide repeat domain (CTD) of the largest RNA polymerase II subunit POLR2A, and participates in dephosphorylation of the CTD by RPAP2. May act as a negative regulator of cyclin-D1 (CCND1) and cyclin-E (CCNE1) in the cell cycle. The protein is Regulation of nuclear pre-mRNA domain-containing protein 1A (RPRD1A) of Gallus gallus (Chicken).